The following is a 252-amino-acid chain: 3-dehydroquinate dehydratase (252 aa).

Residues Ser21, 46–48 (EWR), and Arg82 contribute to the 3-dehydroquinate site. His143 (proton donor/acceptor) is an active-site residue. Lys170 acts as the Schiff-base intermediate with substrate in catalysis. Residues Arg213, Ser232, and Gln236 each coordinate 3-dehydroquinate.

This sequence belongs to the type-I 3-dehydroquinase family. As to quaternary structure, homodimer.

The catalysed reaction is 3-dehydroquinate = 3-dehydroshikimate + H2O. Its pathway is metabolic intermediate biosynthesis; chorismate biosynthesis; chorismate from D-erythrose 4-phosphate and phosphoenolpyruvate: step 3/7. Its function is as follows. Involved in the third step of the chorismate pathway, which leads to the biosynthesis of aromatic amino acids. Catalyzes the cis-dehydration of 3-dehydroquinate (DHQ) and introduces the first double bond of the aromatic ring to yield 3-dehydroshikimate. The sequence is that of 3-dehydroquinate dehydratase from Escherichia coli O139:H28 (strain E24377A / ETEC).